The sequence spans 276 residues: MQLNNEVALVTGGGSGLGRAIVDRFVAEGARVAVLDKSAARLQELQAAHGAKVLGIEGDVRVLADHQKAARECVAAFGKIDCLIPNAGIWDYSMPLVDIPDDRIDAAFDEVFHINVKGYLLAVKACLPALVQSRGSVVFTISNAGFYPNGGGPLYTGAKHAVVGMVRELAYELAPHVRVNGVAPGGMSTDLRGPASLGMANQAISSVPLGEMLTSVLPVGRMPVRAEYTGAYVFFATRGDTFPTTGALLNHDGGMGVRGFFEATGGKDLPQKLRLS.

9–33 (LVTGGGSGLGRAIVDRFVAEGARVA) is a binding site for NAD(+). Ser142 contacts substrate. Residue Tyr155 is the Proton acceptor of the active site.

Belongs to the short-chain dehydrogenases/reductases (SDR) family.

It carries out the reaction (2R,3S)-3-phenylcyclohexa-3,5-diene-1,2-diol + NAD(+) = biphenyl-2,3-diol + NADH + H(+). The protein operates within xenobiotic degradation; biphenyl degradation; 2-hydroxy-2,4-pentadienoate and benzoate from biphenyl: step 2/4. The chain is Cis-2,3-dihydrobiphenyl-2,3-diol dehydrogenase (bphB) from Pseudomonas sp. (strain KKS102).